The chain runs to 428 residues: Serine--tRNA ligase (428 aa).

236–238 (TAE) lines the L-serine pocket. ATP is bound at residue 267-269 (RSE). L-serine is bound at residue Glu-290. 354–357 (EISS) contributes to the ATP binding site. Ser-388 contacts L-serine.

The protein belongs to the class-II aminoacyl-tRNA synthetase family. Type-1 seryl-tRNA synthetase subfamily. As to quaternary structure, homodimer. The tRNA molecule binds across the dimer.

Its subcellular location is the cytoplasm. It catalyses the reaction tRNA(Ser) + L-serine + ATP = L-seryl-tRNA(Ser) + AMP + diphosphate + H(+). The enzyme catalyses tRNA(Sec) + L-serine + ATP = L-seryl-tRNA(Sec) + AMP + diphosphate + H(+). It participates in aminoacyl-tRNA biosynthesis; selenocysteinyl-tRNA(Sec) biosynthesis; L-seryl-tRNA(Sec) from L-serine and tRNA(Sec): step 1/1. In terms of biological role, catalyzes the attachment of serine to tRNA(Ser). Is also able to aminoacylate tRNA(Sec) with serine, to form the misacylated tRNA L-seryl-tRNA(Sec), which will be further converted into selenocysteinyl-tRNA(Sec). The polypeptide is Serine--tRNA ligase (Psychrobacter sp. (strain PRwf-1)).